We begin with the raw amino-acid sequence, 104 residues long: Thioredoxin (104 aa).

One can recognise a Thioredoxin domain in the interval 2–104 (KQVSDASFEE…KLFEWVEASV (103 aa)). C29 and C32 form a disulfide bridge.

Belongs to the thioredoxin family.

In terms of biological role, participates in various redox reactions through the reversible oxidation of its active center dithiol to a disulfide and catalyzes dithiol-disulfide exchange reactions. The protein is Thioredoxin (trxA) of Rhodospirillum rubrum.